The primary structure comprises 255 residues: Indole-3-glycerol phosphate synthase (255 aa).

Belongs to the TrpC family.

The enzyme catalyses 1-(2-carboxyphenylamino)-1-deoxy-D-ribulose 5-phosphate + H(+) = (1S,2R)-1-C-(indol-3-yl)glycerol 3-phosphate + CO2 + H2O. Its pathway is amino-acid biosynthesis; L-tryptophan biosynthesis; L-tryptophan from chorismate: step 4/5. The chain is Indole-3-glycerol phosphate synthase from Shouchella clausii (strain KSM-K16) (Alkalihalobacillus clausii).